Reading from the N-terminus, the 410-residue chain is Arginine deiminase (410 aa).

The Amidino-cysteine intermediate role is filled by Cys-400.

Belongs to the arginine deiminase family.

Its subcellular location is the cytoplasm. The enzyme catalyses L-arginine + H2O = L-citrulline + NH4(+). Its pathway is amino-acid degradation; L-arginine degradation via ADI pathway; carbamoyl phosphate from L-arginine: step 1/2. This is Arginine deiminase from Levilactobacillus brevis (strain ATCC 367 / BCRC 12310 / CIP 105137 / JCM 1170 / LMG 11437 / NCIMB 947 / NCTC 947) (Lactobacillus brevis).